Here is a 320-residue protein sequence, read N- to C-terminus: Histidine decarboxylase proenzyme (320 aa).

Positions 2-11 (NKNLEANRNR) are excised as a propeptide. S98 carries the post-translational modification Pyruvic acid (Ser). E215 acts as the Proton donor in catalysis.

The proenzyme is a hexamer of identical pi chains; each pi chain monomer is cleaved to form a small (or beta) chain and a large (or alpha) chain by non-hydrolytic self-catalysis. The cofactor is pyruvate.

The catalysed reaction is L-histidine + H(+) = histamine + CO2. The sequence is that of Histidine decarboxylase proenzyme (hdc) from Clostridium perfringens (strain 13 / Type A).